The sequence spans 176 residues: MSELTTIARPYAKAAFDFAVEQSAVEKWHEMLAFIAEVAKDEQIQQFLTSSLSPEKVADTVISICGEHLDKSGQNLIRLMAENKRLTVLPAVFNEFRHYMEEYNAIAEVQVISAQPLNATQTDKIAAAMEKRLARKVKLNCSVDNTLIAGVIIRTDDFVIDGSSRGQLNRLANELQ.

The protein belongs to the ATPase delta chain family. As to quaternary structure, F-type ATPases have 2 components, F(1) - the catalytic core - and F(0) - the membrane proton channel. F(1) has five subunits: alpha(3), beta(3), gamma(1), delta(1), epsilon(1). F(0) has three main subunits: a(1), b(2) and c(10-14). The alpha and beta chains form an alternating ring which encloses part of the gamma chain. F(1) is attached to F(0) by a central stalk formed by the gamma and epsilon chains, while a peripheral stalk is formed by the delta and b chains.

It is found in the cell inner membrane. Its function is as follows. F(1)F(0) ATP synthase produces ATP from ADP in the presence of a proton or sodium gradient. F-type ATPases consist of two structural domains, F(1) containing the extramembraneous catalytic core and F(0) containing the membrane proton channel, linked together by a central stalk and a peripheral stalk. During catalysis, ATP synthesis in the catalytic domain of F(1) is coupled via a rotary mechanism of the central stalk subunits to proton translocation. Functionally, this protein is part of the stalk that links CF(0) to CF(1). It either transmits conformational changes from CF(0) to CF(1) or is implicated in proton conduction. This Actinobacillus succinogenes (strain ATCC 55618 / DSM 22257 / CCUG 43843 / 130Z) protein is ATP synthase subunit delta.